The sequence spans 363 residues: Probable F-box protein At4g22165 (363 aa).

The F-box domain occupies 7-56 (PNTWSELPLDLLNLVFKRLSLVNFQRAKSVCSTRYSVSRQCVPERQIALL).

This chain is Probable F-box protein At4g22165, found in Arabidopsis thaliana (Mouse-ear cress).